We begin with the raw amino-acid sequence, 244 residues long: U4/U6.U5 tri-snRNP-associated protein 3-like protein C162.01c (244 aa).

Basic and acidic residues-rich tracts occupy residues 1 to 11 and 20 to 116; these read MSSSRSGEHRR and ESSR…RRDG. Disordered stretches follow at residues 1-192 and 223-244; these read MSSS…EDEA and KKTK…LDNE. A phosphoserine mark is found at Ser121 and Ser140. Residues 126 to 182 are compositionally biased toward basic and acidic residues; the sequence is GLERKREHEKLQAPSPKEEEERPVDQGDKMDGVKEDKDGSLEVGKSHDAMTRTKSAE. Acidic residues predominate over residues 183 to 192; it reads EEIVEQEDEA.

This sequence belongs to the SNUT3 family. Part of a tri-snRNP complex.

The protein localises to the nucleus. Functionally, may play a role in mRNA splicing. The chain is U4/U6.U5 tri-snRNP-associated protein 3-like protein C162.01c from Schizosaccharomyces pombe (strain 972 / ATCC 24843) (Fission yeast).